A 133-amino-acid polypeptide reads, in one-letter code: Profilin Sal k 4.0201 (133 aa).

A disulfide bridge connects residues Cys95 and Cys117.

Belongs to the profilin family. In terms of assembly, occurs in many kinds of cells as a complex with monomeric actin in a 1:1 ratio. In terms of tissue distribution, expressed in pollen (at protein and mRNA level).

It is found in the cytoplasm. The protein resides in the cytoskeleton. In terms of biological role, binds to actin and affects the structure of the cytoskeleton. At high concentrations, profilin prevents the polymerization of actin, whereas it enhances it at low concentrations. The protein is Profilin Sal k 4.0201 of Kali turgidum (Prickly saltwort).